The following is a 457-amino-acid chain: Toxin and drug export protein A (457 aa).

The N-terminal stretch at 1-23 is a signal peptide; it reads MFTIKKLTLTIVVATTLTGCANI.

This sequence belongs to the outer membrane factor (OMF) (TC 1.B.17) family. As to quaternary structure, homotrimer. Probably part of a complex composed of LtxB, LtxD and TdeA, which forms a single transport channel across the two membranes.

It is found in the cell outer membrane. Required for secretion of the LtxA leukotoxin and resistance to various antimicrobial compounds. The protein is Toxin and drug export protein A of Aggregatibacter actinomycetemcomitans (Actinobacillus actinomycetemcomitans).